We begin with the raw amino-acid sequence, 421 residues long: Nuclear speckle RNA-binding protein B (421 aa).

Disordered regions lie at residues 1 to 64 (MDNR…VNIY), 86 to 114 (TGQT…MVDT), and 197 to 226 (TDPQ…GIPH). Residues 33–44 (PLAPPHPQPQPP) show a composition bias toward pro residues. A compositionally biased stretch (low complexity) spans 89 to 103 (TSTSTTSSSSSSSTS). One can recognise an RRM domain in the interval 323–409 (NTLYVEGLPS…KILRLQFFRN (87 aa)).

Isoform 1: Expressed in root meristems, lateral root primordia, root vascular tissues and cotyledon vascular tissues. Isoform 2: Expressed in root meristems, lateral root primordia and root vascular tissues.

Its subcellular location is the nucleus speckle. Functionally, alternative splicing (AS) regulator that binds to specific mRNAs and modulates auxin effects on the transcriptome. Displaced from its targets upon binding to AS competitor long non-coding RNA (ASCO-RNA). The sequence is that of Nuclear speckle RNA-binding protein B from Arabidopsis thaliana (Mouse-ear cress).